A 358-amino-acid polypeptide reads, in one-letter code: 3-isopropylmalate dehydrogenase (358 aa).

R92, R102, R130, and D224 together coordinate substrate. The Mg(2+) site is built by D224, D248, and D252. An NAD(+)-binding site is contributed by 282–294; sequence GSAPDIAGQGIAN.

Belongs to the isocitrate and isopropylmalate dehydrogenases family. LeuB type 1 subfamily. As to quaternary structure, homodimer. Requires Mg(2+) as cofactor. It depends on Mn(2+) as a cofactor.

The protein localises to the cytoplasm. The enzyme catalyses (2R,3S)-3-isopropylmalate + NAD(+) = 4-methyl-2-oxopentanoate + CO2 + NADH. The protein operates within amino-acid biosynthesis; L-leucine biosynthesis; L-leucine from 3-methyl-2-oxobutanoate: step 3/4. In terms of biological role, catalyzes the oxidation of 3-carboxy-2-hydroxy-4-methylpentanoate (3-isopropylmalate) to 3-carboxy-4-methyl-2-oxopentanoate. The product decarboxylates to 4-methyl-2 oxopentanoate. This Bordetella pertussis (strain Tohama I / ATCC BAA-589 / NCTC 13251) protein is 3-isopropylmalate dehydrogenase.